Here is a 142-residue protein sequence, read N- to C-terminus: Hemoglobin subunit alpha-2 (142 aa).

The 141-residue stretch at 2–142 folds into the Globin domain; the sequence is VLSAADKSNV…VSTVLTSKYR (141 aa). Residue His59 coordinates O2. His88 provides a ligand contact to heme b.

It belongs to the globin family. In terms of assembly, heterotetramer of two alpha chains and two beta chains.

Its function is as follows. Involved in oxygen transport from the lung to the various peripheral tissues. Functionally, hemopressin acts as an antagonist peptide of the cannabinoid receptor CNR1. Hemopressin-binding efficiently blocks cannabinoid receptor CNR1 and subsequent signaling. This chain is Hemoglobin subunit alpha-2 (HBA2), found in Capra hircus (Goat).